The sequence spans 233 residues: Cell surface glycoprotein gp42 (233 aa).

The first 16 residues, 1–16 (MLLWMVLLLCVSMTEA), serve as a signal peptide directing secretion. Ig-like domains follow at residues 23–98 (PVLS…GTIQ) and 115–195 (PVLT…RDIS). 3 N-linked (GlcNAc...) asparagine glycosylation sites follow: Asn-29, Asn-66, and Asn-181. 2 disulfide bridges follow: Cys-40–Cys-88 and Cys-136–Cys-184. Residue Gly-206 is the site of GPI-anchor amidated glycine attachment. The propeptide at 207-233 (TASMKSTTVVIWLPVSCLVGWPWLLRF) is removed in mature form.

NK cells.

Its subcellular location is the cell membrane. This is Cell surface glycoprotein gp42 from Rattus norvegicus (Rat).